A 566-amino-acid polypeptide reads, in one-letter code: Beta,beta-carotene 15,15'-dioxygenase (566 aa).

Fe cation is bound by residues His-172, His-237, His-308, and His-514. The interval 530-566 (PAETQEVENSDHPTDPTAPELSHSENDFTAGHGGSSL) is disordered.

This sequence belongs to the carotenoid oxygenase family. It depends on Fe(2+) as a cofactor. As to expression, expressed in liver, kidney, small intestine and testis.

The protein localises to the cytoplasm. Its subcellular location is the cytosol. The enzyme catalyses all-trans-beta-carotene + O2 = 2 all-trans-retinal. Its pathway is cofactor metabolism; retinol metabolism. In terms of biological role, symmetrically cleaves beta-carotene into two molecules of retinal using a dioxygenase mechanism. This Mus musculus (Mouse) protein is Beta,beta-carotene 15,15'-dioxygenase.